A 404-amino-acid polypeptide reads, in one-letter code: Putative aspartate aminotransferase, cytoplasmic 2 (404 aa).

An N6-(pyridoxal phosphate)lysine modification is found at Lys249.

It belongs to the class-I pyridoxal-phosphate-dependent aminotransferase family. In terms of assembly, homodimer. Pyridoxal 5'-phosphate is required as a cofactor.

The protein localises to the cytoplasm. The enzyme catalyses L-aspartate + 2-oxoglutarate = oxaloacetate + L-glutamate. This is Putative aspartate aminotransferase, cytoplasmic 2 (Got1l1) from Mus musculus (Mouse).